The chain runs to 668 residues: Methionine--tRNA ligase (668 aa).

The 'HIGH' region signature appears at 11 to 21 (AYTNGPLHIGH). Cysteine 146, cysteine 149, cysteine 159, and cysteine 162 together coordinate Zn(2+). Positions 332–336 (KMSTS) match the 'KMSKS' region motif. Threonine 335 lines the ATP pocket. One can recognise a tRNA-binding domain in the interval 567–668 (EFNRLDLRVG…REVEPGERIR (102 aa)).

The protein belongs to the class-I aminoacyl-tRNA synthetase family. MetG type 1 subfamily. In terms of assembly, homodimer. The cofactor is Zn(2+).

It is found in the cytoplasm. The enzyme catalyses tRNA(Met) + L-methionine + ATP = L-methionyl-tRNA(Met) + AMP + diphosphate. Its function is as follows. Is required not only for elongation of protein synthesis but also for the initiation of all mRNA translation through initiator tRNA(fMet) aminoacylation. This is Methionine--tRNA ligase from Methanopyrus kandleri (strain AV19 / DSM 6324 / JCM 9639 / NBRC 100938).